The sequence spans 117 residues: DNA-directed RNA polymerase subunit omega (117 aa).

Belongs to the RNA polymerase subunit omega family. As to quaternary structure, the RNAP catalytic core consists of 2 alpha, 1 beta, 1 beta' and 1 omega subunit. When a sigma factor is associated with the core the holoenzyme is formed, which can initiate transcription.

It catalyses the reaction RNA(n) + a ribonucleoside 5'-triphosphate = RNA(n+1) + diphosphate. In terms of biological role, promotes RNA polymerase assembly. Latches the N- and C-terminal regions of the beta' subunit thereby facilitating its interaction with the beta and alpha subunits. The polypeptide is DNA-directed RNA polymerase subunit omega (Jannaschia sp. (strain CCS1)).